The following is a 271-amino-acid chain: tRNA pseudouridine synthase A (271 aa).

Catalysis depends on Asp51, which acts as the Nucleophile. Tyr109 contributes to the substrate binding site.

It belongs to the tRNA pseudouridine synthase TruA family. As to quaternary structure, homodimer.

The enzyme catalyses uridine(38/39/40) in tRNA = pseudouridine(38/39/40) in tRNA. Formation of pseudouridine at positions 38, 39 and 40 in the anticodon stem and loop of transfer RNAs. The sequence is that of tRNA pseudouridine synthase A from Methylococcus capsulatus (strain ATCC 33009 / NCIMB 11132 / Bath).